The sequence spans 223 residues: MNSWTEAIGEEKVQPYFQQLLQQVYQARASGKIIYPPQHEVFSAFALTDFKAVKVVILGQDPYHGPNQAHGLAFSVKPSVVPPPSLVNIYKELAQDIAGFQVPSHGYLIDWAKQGVLLLNTVLTVQQGMAHSHATLGWEIFTDKVIAQLNDHRENLVFLLWGSHAQKKGQFINRSRHCVLTAPHPSPLSAHRGFFGCQHFSKANAYLQSKGIATINWQLPLVV.

Asp-61 acts as the Proton acceptor in catalysis.

It belongs to the uracil-DNA glycosylase (UDG) superfamily. UNG family.

Its subcellular location is the cytoplasm. It catalyses the reaction Hydrolyzes single-stranded DNA or mismatched double-stranded DNA and polynucleotides, releasing free uracil.. Excises uracil residues from the DNA which can arise as a result of misincorporation of dUMP residues by DNA polymerase or due to deamination of cytosine. This is Uracil-DNA glycosylase from Haemophilus ducreyi (strain 35000HP / ATCC 700724).